The following is a 58-amino-acid chain: MKTIFVVILVLFVLSAMLASSPDTTAEAAGCRGNCVTICRDKGKVGGKCYNGKCFCFN.

Residues 1-19 form the signal peptide; sequence MKTIFVVILVLFVLSAMLA. Intrachain disulfides connect cysteine 31/cysteine 49, cysteine 35/cysteine 54, and cysteine 39/cysteine 56.

The protein belongs to the short scorpion toxin superfamily. Potassium channel inhibitor family. Alpha-KTx 26 subfamily. In terms of tissue distribution, expressed by the venom gland.

Its subcellular location is the secreted. In terms of biological role, inhibits voltage-gated potassium channels. This Lychas mucronatus (Chinese swimming scorpion) protein is Potassium channel toxin alpha-KTx 26.2.